We begin with the raw amino-acid sequence, 421 residues long: Putative bifunctional polynucleotide phosphatase/kinase (421 aa).

Positions 25–231 are phosphatase; the sequence is DSYLKGIINN…SENLKTNYKL (207 aa). Residues 235–415 form a kinase region; it reads NPTEIIDEIE…DDPKWKRSFM (181 aa). 265 to 272 lines the ATP pocket; it reads GQPGSGKS.

This sequence in the N-terminal section; belongs to the DNA 3' phosphatase family.

It catalyses the reaction a 3'end (2'-deoxyribonucleotide 3'-phosphate)-DNA + H2O = a 3'-end 2'-deoxyribonucleotide-DNA + phosphate. The enzyme catalyses a 5'-end dephospho-2'-deoxyribonucleoside-DNA + ATP = a 5'-end 5'-phospho-2'-deoxyribonucleoside-DNA + ADP + H(+). The chain is Putative bifunctional polynucleotide phosphatase/kinase from Acanthamoeba polyphaga mimivirus (APMV).